Consider the following 182-residue polypeptide: Ribosome-recycling factor (182 aa).

Belongs to the RRF family.

It localises to the cytoplasm. Responsible for the release of ribosomes from messenger RNA at the termination of protein biosynthesis. May increase the efficiency of translation by recycling ribosomes from one round of translation to another. The protein is Ribosome-recycling factor of Prochlorococcus marinus (strain MIT 9515).